Consider the following 182-residue polypeptide: MDMMKIIKKYINSEEEAQKLLKWAIDNANIYYLRNIVNTKVNIEETKFKTVHNIGIEYSKDNKYKLSYRNKPSIATNEKYKELCNLIRSTNGIEKETLRYLLFGIKCVHAKVEYDIEKVPDYDYSNYFDVLKEKSTIRCVACKSNNTIPMILQTRSSDEEPTVRVVCKDCGKNFAPPRLKFN.

The TFIIS-type zinc-finger motif lies at 135 to 175 (STIRCVACKSNNTIPMILQTRSSDEEPTVRVVCKDCGKNFA). Positions 139, 142, 167, and 170 each coordinate Zn(2+).

It belongs to the poxviridae DNA-directed RNA polymerase 30 kDa subunit family. As to quaternary structure, this enzyme consists of at least eight subunits.

The catalysed reaction is RNA(n) + a ribonucleoside 5'-triphosphate = RNA(n+1) + diphosphate. Its function is as follows. DNA-dependent RNA polymerase catalyzes the transcription of DNA into RNA using the four ribonucleoside triphosphates as substrates. Rpo30 may have a role in RNA chain elongation. This chain is DNA-directed RNA polymerase 30 kDa polypeptide (RPO30), found in Fowlpox virus (strain NVSL) (FPV).